The primary structure comprises 193 residues: MAKLYFNYSTMNAGKSTMLLQASYNYQERGMRTLIFTAAFDDRAGVGRVASRIGLSSEARTFDENTDLFAEVAALHAQAPVACVFVDEANFLSEHHVWQLANIADRLNIPVMTYGLRTDFQGKLFPASKELLAIADELREIRTICHCGRKATMVARFDSEGKVVTEGAQIEVGGNGKYVSFCRRHWVETFNCS.

ATP contacts are provided by residues 9–16 (STMNAGKS) and 87–90 (DEAN). The active-site Proton acceptor is glutamate 88. Cysteine 145, cysteine 147, cysteine 182, and histidine 185 together coordinate Zn(2+).

The protein belongs to the thymidine kinase family. Homotetramer.

The protein localises to the cytoplasm. The enzyme catalyses thymidine + ATP = dTMP + ADP + H(+). The protein is Thymidine kinase of Agrobacterium fabrum (strain C58 / ATCC 33970) (Agrobacterium tumefaciens (strain C58)).